The chain runs to 408 residues: Formate-dependent phosphoribosylglycinamide formyltransferase (408 aa).

N(1)-(5-phospho-beta-D-ribosyl)glycinamide-binding positions include 25-26 (EL) and glutamate 85. Residues arginine 118, lysine 159, 164–169 (SSGKGQ), 199–202 (EAFV), and glutamate 207 each bind ATP. Positions 123 to 318 (KLAAEELGLP…EFELHAKAIL (196 aa)) constitute an ATP-grasp domain. 2 residues coordinate Mg(2+): glutamate 277 and glutamate 289. N(1)-(5-phospho-beta-D-ribosyl)glycinamide is bound by residues aspartate 296, lysine 365, and 372 to 373 (RR).

This sequence belongs to the PurK/PurT family. In terms of assembly, homodimer.

It catalyses the reaction N(1)-(5-phospho-beta-D-ribosyl)glycinamide + formate + ATP = N(2)-formyl-N(1)-(5-phospho-beta-D-ribosyl)glycinamide + ADP + phosphate + H(+). Its pathway is purine metabolism; IMP biosynthesis via de novo pathway; N(2)-formyl-N(1)-(5-phospho-D-ribosyl)glycinamide from N(1)-(5-phospho-D-ribosyl)glycinamide (formate route): step 1/1. Involved in the de novo purine biosynthesis. Catalyzes the transfer of formate to 5-phospho-ribosyl-glycinamide (GAR), producing 5-phospho-ribosyl-N-formylglycinamide (FGAR). Formate is provided by PurU via hydrolysis of 10-formyl-tetrahydrofolate. In Corynebacterium glutamicum (strain R), this protein is Formate-dependent phosphoribosylglycinamide formyltransferase.